A 414-amino-acid polypeptide reads, in one-letter code: 3-oxoacyl-[acyl-carrier-protein] synthase 2 (414 aa).

Positions 3-413 constitute a Ketosynthase family 3 (KS3) domain; sequence KRRVVVTGMG…GTNGSLIFKR (411 aa). Catalysis depends on for beta-ketoacyl synthase activity residues Cys-164, His-304, and His-342.

It belongs to the thiolase-like superfamily. Beta-ketoacyl-ACP synthases family. In terms of assembly, homodimer.

The catalysed reaction is a fatty acyl-[ACP] + malonyl-[ACP] + H(+) = a 3-oxoacyl-[ACP] + holo-[ACP] + CO2. The enzyme catalyses (9Z)-hexadecenoyl-[ACP] + malonyl-[ACP] + H(+) = 3-oxo-(11Z)-octadecenoyl-[ACP] + holo-[ACP] + CO2. It participates in lipid metabolism; fatty acid biosynthesis. Its function is as follows. Involved in the type II fatty acid elongation cycle. Catalyzes the elongation of a wide range of acyl-ACP by the addition of two carbons from malonyl-ACP to an acyl acceptor. Can efficiently catalyze the conversion of palmitoleoyl-ACP (cis-hexadec-9-enoyl-ACP) to cis-vaccenoyl-ACP (cis-octadec-11-enoyl-ACP), an essential step in the thermal regulation of fatty acid composition. This chain is 3-oxoacyl-[acyl-carrier-protein] synthase 2 (fabF), found in Vibrio cholerae serotype O1 (strain ATCC 39315 / El Tor Inaba N16961).